The following is a 293-amino-acid chain: Ribosomal protein L11 methyltransferase (293 aa).

S-adenosyl-L-methionine contacts are provided by T145, G166, D188, and N230.

This sequence belongs to the methyltransferase superfamily. PrmA family.

The protein resides in the cytoplasm. The catalysed reaction is L-lysyl-[protein] + 3 S-adenosyl-L-methionine = N(6),N(6),N(6)-trimethyl-L-lysyl-[protein] + 3 S-adenosyl-L-homocysteine + 3 H(+). In terms of biological role, methylates ribosomal protein L11. The sequence is that of Ribosomal protein L11 methyltransferase from Shewanella putrefaciens (strain CN-32 / ATCC BAA-453).